The following is an 843-amino-acid chain: Translation initiation factor IF-2 (843 aa).

The segment at 198 to 219 (YKREEEEKKSKAKKAGGKGFKK) is disordered. Residues 207–219 (SKAKKAGGKGFKK) are compositionally biased toward basic residues. The region spanning 345 to 512 (SRAPVVTIMG…AVLLQSEVLE (168 aa)) is the tr-type G domain. The tract at residues 354–361 (GHVDHGKT) is G1. 354 to 361 (GHVDHGKT) is a binding site for GTP. Positions 379 to 383 (GITQH) are G2. The interval 400-403 (DTPG) is G3. Residues 400-404 (DTPGH) and 454-457 (NKID) contribute to the GTP site. The tract at residues 454–457 (NKID) is G4. The segment at 490 to 492 (SAK) is G5.

It belongs to the TRAFAC class translation factor GTPase superfamily. Classic translation factor GTPase family. IF-2 subfamily.

The protein resides in the cytoplasm. Functionally, one of the essential components for the initiation of protein synthesis. Protects formylmethionyl-tRNA from spontaneous hydrolysis and promotes its binding to the 30S ribosomal subunits. Also involved in the hydrolysis of GTP during the formation of the 70S ribosomal complex. The chain is Translation initiation factor IF-2 from Francisella tularensis subsp. tularensis (strain WY96-3418).